Consider the following 198-residue polypeptide: MDLIHRISRQFEDSARIKLEALEALAAPIAGAVEIMIGSLLNNGKILACGNGGSAADAQHFAAELVNRFEMERPPLAAIALTTDTSTLTSIANDYDFTQVFSKQVRALGHPGDVLLAISTSGNSPNVIEAIAAAREREMRVIALTGNDGGQIGALLDDGDVHLCVPAQRTARIQEVHLLTLHCLCDGIDCLLLGVEDQ.

One can recognise an SIS domain in the interval 36 to 198 (MIGSLLNNGK…DCLLLGVEDQ (163 aa)). 51-53 (NGG) serves as a coordination point for substrate. Residues H60 and E64 each coordinate Zn(2+). Substrate contacts are provided by residues E64, 93–94 (ND), 119–121 (STS), S124, and Q174. Residues Q174 and H182 each contribute to the Zn(2+) site.

It belongs to the SIS family. GmhA subfamily. As to quaternary structure, homotetramer. Zn(2+) serves as cofactor.

It localises to the cytoplasm. The enzyme catalyses 2 D-sedoheptulose 7-phosphate = D-glycero-alpha-D-manno-heptose 7-phosphate + D-glycero-beta-D-manno-heptose 7-phosphate. The protein operates within carbohydrate biosynthesis; D-glycero-D-manno-heptose 7-phosphate biosynthesis; D-glycero-alpha-D-manno-heptose 7-phosphate and D-glycero-beta-D-manno-heptose 7-phosphate from sedoheptulose 7-phosphate: step 1/1. In terms of biological role, catalyzes the isomerization of sedoheptulose 7-phosphate in D-glycero-D-manno-heptose 7-phosphate. The sequence is that of Phosphoheptose isomerase from Aromatoleum aromaticum (strain DSM 19018 / LMG 30748 / EbN1) (Azoarcus sp. (strain EbN1)).